Consider the following 26-residue polypeptide: Hemocyanin subunit 5 (26 aa).

It belongs to the tyrosinase family. Hemocyanin subfamily. In terms of tissue distribution, hemolymph.

Its subcellular location is the secreted. The protein resides in the extracellular space. Its function is as follows. Hemocyanins are copper-containing oxygen carriers occurring freely dissolved in the hemolymph of many mollusks and arthropods. In Maja squinado (Mediterranean spider crab), this protein is Hemocyanin subunit 5.